The primary structure comprises 829 residues: DNA ligase (829 aa).

Positions 1 to 23 are disordered; the sequence is MPAQTSRARPVEEMTAAQAREAH. Residues 47 to 51, 96 to 97, and Glu130 each bind NAD(+); these read DAEYD and SL. Lys132 (N6-AMP-lysine intermediate) is an active-site residue. NAD(+) is bound by residues Arg153, Glu190, Lys306, and Lys330. The Zn(2+) site is built by Cys453, Cys456, Cys477, and Cys483. One can recognise a BRCT domain in the interval 750-829; the sequence is AAAAVFSGQT…AEWLAMVEAA (80 aa).

Belongs to the NAD-dependent DNA ligase family. LigA subfamily. Requires Mg(2+) as cofactor. The cofactor is Mn(2+).

It catalyses the reaction NAD(+) + (deoxyribonucleotide)n-3'-hydroxyl + 5'-phospho-(deoxyribonucleotide)m = (deoxyribonucleotide)n+m + AMP + beta-nicotinamide D-nucleotide.. Functionally, DNA ligase that catalyzes the formation of phosphodiester linkages between 5'-phosphoryl and 3'-hydroxyl groups in double-stranded DNA using NAD as a coenzyme and as the energy source for the reaction. It is essential for DNA replication and repair of damaged DNA. In Methylobacterium nodulans (strain LMG 21967 / CNCM I-2342 / ORS 2060), this protein is DNA ligase.